The primary structure comprises 302 residues: uncharacterized protein (302 aa).

The next 9 helical transmembrane spans lie at 3-23 (ILGVGYFLLGLILLYYGSDWF), 39-59 (FVIGATVMAIGTSLPEILTSA), 77-97 (SCICNIGLVLGLSAIISPIIV), 106-126 (LVYLLFVIFAAVIGIDGFSWI), 128-148 (GVVLLILFIIYLRWTVKNGSA), 163-183 (FSLVLLIIGLIGVLVGAELFV), 199-219 (VIGFTLVAFGTSLPELMVSLA), 227-247 (GMVLGNVIGSNIADIGGALAV), and 254-274 (LPAENVQMAVLVIMSLLLYLF).

It belongs to the Ca(2+):cation antiporter (CaCA) (TC 2.A.19) family.

Its subcellular location is the cell membrane. This is an uncharacterized protein from Methanocaldococcus jannaschii (strain ATCC 43067 / DSM 2661 / JAL-1 / JCM 10045 / NBRC 100440) (Methanococcus jannaschii).